A 123-amino-acid polypeptide reads, in one-letter code: Small ribosomal subunit protein uS12cz/uS12cy (123 aa).

This sequence belongs to the universal ribosomal protein uS12 family. As to quaternary structure, part of the 30S ribosomal subunit.

Its subcellular location is the plastid. It is found in the chloroplast. Its function is as follows. With S4 and S5 plays an important role in translational accuracy. Located at the interface of the 30S and 50S subunits. The chain is Small ribosomal subunit protein uS12cz/uS12cy (rps12-A) from Platanus occidentalis (Sycamore).